Reading from the N-terminus, the 568-residue chain is Periplasmic trehalase (568 aa).

The signal sequence occupies residues 1 to 38 (MPHAPARSGDAMSAAAPPCCTSLLGLSLSMFVAPCALA). Substrate contacts are provided by residues Arg-169, 176–177 (WD), Asn-213, 222–224 (RSQ), 294–296 (RPE), and Gly-327. Active-site proton donor/acceptor residues include Asp-329 and Glu-511. Glu-526 contacts substrate.

This sequence belongs to the glycosyl hydrolase 37 family.

It localises to the periplasm. The enzyme catalyses alpha,alpha-trehalose + H2O = alpha-D-glucose + beta-D-glucose. Provides the cells with the ability to utilize trehalose at high osmolarity by splitting it into glucose molecules that can subsequently be taken up by the phosphotransferase-mediated uptake system. This is Periplasmic trehalase from Xanthomonas campestris pv. campestris (strain B100).